We begin with the raw amino-acid sequence, 358 residues long: Protein ocs (358 aa).

The protein belongs to the lysopine/nopaline/octopine/opine/vitopine dehydrogenases family. Monomer.

The catalysed reaction is D-octopine + NAD(+) + H2O = L-arginine + pyruvate + NADH + H(+). It carries out the reaction D-lysopine + NADP(+) + H2O = L-lysine + pyruvate + NADPH + H(+). Reductive condensation of pyruvate and arginine, lysine, histidine, or octopine to form octopine, lysopine, histopine, or octopinic acid, respectively. NADPH is the preferred cofactor, but NADH can also be used. The sequence is that of Protein ocs (ocs) from Agrobacterium tumefaciens (strain Ach5).